The primary structure comprises 119 residues: Ethylene-responsive proteinase inhibitor 1 (119 aa).

The signal sequence occupies residues Met1–Ala27. The propeptide occupies Gln28–Gln48.

The protein belongs to the protease inhibitor I13 (potato type I serine protease inhibitor) family.

Its subcellular location is the secreted. In Solanum lycopersicum (Tomato), this protein is Ethylene-responsive proteinase inhibitor 1.